Reading from the N-terminus, the 223-residue chain is Shematrin-like protein 2 (223 aa).

A signal peptide spans 1 to 19; that stretch reads MRILANLILLGVLFGVCLC.

Prismatic layer of shell (at protein level).

Its subcellular location is the secreted. The chain is Shematrin-like protein 2 from Margaritifera margaritifera (Freshwater pearl mussel).